The following is a 628-amino-acid chain: (+)-alpha-pinene synthase, chloroplastic (628 aa).

A chloroplast-targeting transit peptide spans 1–48 (MALVSAVPLNSKLCLRRTLFGFSHELKAIHSTVPNLGMCRGGKSIAPS). Mg(2+) contacts are provided by D379, D383, and D531. Positions 379 to 383 (DDIYD) match the DDXXD motif motif. S539 provides a ligand contact to K(+).

Belongs to the terpene synthase family. Tpsd subfamily. The cofactor is Mg(2+). Mn(2+) is required as a cofactor. K(+) serves as cofactor.

The protein resides in the plastid. It localises to the chloroplast. The catalysed reaction is (2E)-geranyl diphosphate = (1R,5R)-alpha-pinene + diphosphate. It participates in terpene metabolism; oleoresin biosynthesis. Its function is as follows. Involved in defensive oleoresin formation in conifers in response to insect attack or other injury. Involved in monoterpene (C10) olefins biosynthesis. Produces mainly (+)-alpha-pinene (97%) with a small amount of (-)-alpha-pinene (3%). The polypeptide is (+)-alpha-pinene synthase, chloroplastic (PT30) (Pinus taeda (Loblolly pine)).